We begin with the raw amino-acid sequence, 181 residues long: NADH-quinone oxidoreductase subunit I 2 (181 aa).

4Fe-4S ferredoxin-type domains lie at 44 to 74 and 90 to 119; these read LNRY…VEGA and RVYQ…MTND. 8 residues coordinate [4Fe-4S] cluster: cysteine 54, cysteine 57, cysteine 60, cysteine 64, cysteine 99, cysteine 102, cysteine 105, and cysteine 109.

It belongs to the complex I 23 kDa subunit family. In terms of assembly, NDH-1 is composed of 14 different subunits. Subunits NuoA, H, J, K, L, M, N constitute the membrane sector of the complex. Requires [4Fe-4S] cluster as cofactor.

It localises to the cell membrane. The catalysed reaction is a quinone + NADH + 5 H(+)(in) = a quinol + NAD(+) + 4 H(+)(out). NDH-1 shuttles electrons from NADH, via FMN and iron-sulfur (Fe-S) centers, to quinones in the respiratory chain. The immediate electron acceptor for the enzyme in this species is believed to be menaquinone. Couples the redox reaction to proton translocation (for every two electrons transferred, four hydrogen ions are translocated across the cytoplasmic membrane), and thus conserves the redox energy in a proton gradient. The sequence is that of NADH-quinone oxidoreductase subunit I 2 from Mycolicibacterium paratuberculosis (strain ATCC BAA-968 / K-10) (Mycobacterium paratuberculosis).